The primary structure comprises 98 residues: MPSISININLAFATALLGMLMFRSHMMSSLLCLEGMMLSMFILSTLTILNMQFTMSFTMPILLLVFAACEAAIGLALLVMVSNNYGLDYIQNLNLLQC.

3 helical membrane-spanning segments follow: residues 2-22, 29-49, and 61-81; these read PSIS…MLMF, SLLC…LTIL, and ILLL…LVMV.

Belongs to the complex I subunit 4L family. In terms of assembly, core subunit of respiratory chain NADH dehydrogenase (Complex I) which is composed of 45 different subunits.

The protein localises to the mitochondrion inner membrane. The catalysed reaction is a ubiquinone + NADH + 5 H(+)(in) = a ubiquinol + NAD(+) + 4 H(+)(out). Functionally, core subunit of the mitochondrial membrane respiratory chain NADH dehydrogenase (Complex I) which catalyzes electron transfer from NADH through the respiratory chain, using ubiquinone as an electron acceptor. Part of the enzyme membrane arm which is embedded in the lipid bilayer and involved in proton translocation. This is NADH-ubiquinone oxidoreductase chain 4L (MT-ND4L) from Microcebus simmonsi (Simmons's mouse lemur).